Reading from the N-terminus, the 370-residue chain is Alpha-ketoglutarate-dependent dioxygenase cnsP (370 aa).

Residues 1-12 are compositionally biased toward low complexity; the sequence is MSTTTVITPGTI. The tract at residues 1 to 20 is disordered; it reads MSTTTVITPGTITREKNENG. His-131 is a substrate binding site. Residues His-169 and Asp-171 each contribute to the Fe cation site. Residue Thr-197 participates in 2-oxoglutarate binding. His-321 contributes to the Fe cation binding site. 2-oxoglutarate is bound by residues Arg-333 and Arg-337. Arg-337 serves as a coordination point for substrate.

The protein belongs to the TfdA dioxygenase family. Fe(2+) is required as a cofactor.

It functions in the pathway alkaloid biosynthesis. In terms of biological role, alpha-ketoglutarate-dependent dioxygenase; part of the gene cluster that mediates the biosynthesis of communesins, a prominent class of indole alkaloids with great potential as pharmaceuticals. Communesins are biosynthesized by the coupling of tryptamine and aurantioclavine, two building blocks derived from L-tryptophan. The L-tryptophan decarboxylase cnsB converts L-tryptophan to tryptamine, whereas the tryptophan dimethylallyltransferase cnsF converts L-tryptophan to 4-dimethylallyl tryptophan which is further transformed to aurantioclavine by the aurantioclavine synthase cnsA, probably aided by the catalase cnsD. The cytochrome P450 monooxygenase cnsC catalyzes the heterodimeric coupling between the two different indole moieties, tryptamine and aurantioclavine, to construct vicinal quaternary stereocenters and yield the heptacyclic communesin scaffold. The O-methyltransferase cnsE then methylates the communesin scaffold to produce communesin K, the simplest characterized communesin that contains the heptacyclic core. The dioxygenase cnsJ converts communesin K into communesin I. Acylation to introduce the hexadienyl group at position N16 of communesin I by the acyltransferase cnsK leads to the production of communesin B. The hexadienyl group is produced by the highly reducing polyketide synthase cnsI, before being hydrolytically removed from cnsI by the serine hydrolase cnsH, converted into hexadienyl-CoA by the CoA ligase cnsG, and then transferred to communesin I by cnsK. Surprisingly, cnsK may also be a promiscuous acyltransferase that can tolerate a range of acyl groups, including acetyl-, propionyl-, and butyryl-CoA, which lead to communesins A, G and H respectively. The roles of the alpha-ketoglutarate-dependent dioxygenases cnsM and cnsP have still to be determined. This Penicillium expansum (Blue mold rot fungus) protein is Alpha-ketoglutarate-dependent dioxygenase cnsP.